Here is a 207-residue protein sequence, read N- to C-terminus: MGLKNKIIKIYELNEEERKKVLEFLKKEILNGKIVICGTDTLYGISANALNEKAVRKVYNIKRREFNKPLSICVRDKNEIEKYAYVNDLAKKIIDKFLPGPLTIILKKKPGIPDIVAKDYIGIRIPDEPIIRELSIVPLTTTSANISGKESPTTVDEIDKEVLKKVDYVIDIGKCKYSKPSTIIKIEDDKIISIREGVIPIQKLARC.

The YrdC-like domain occupies 15–199; that stretch reads EEERKKVLEF…KIISIREGVI (185 aa).

The protein belongs to the SUA5 family.

Its subcellular location is the cytoplasm. It catalyses the reaction L-threonine + hydrogencarbonate + ATP = L-threonylcarbamoyladenylate + diphosphate + H2O. In terms of biological role, required for the formation of a threonylcarbamoyl group on adenosine at position 37 (t(6)A37) in tRNAs that read codons beginning with adenine. Catalyzes the conversion of L-threonine, HCO(3)(-)/CO(2) and ATP to give threonylcarbamoyl-AMP (TC-AMP) as the acyladenylate intermediate, with the release of diphosphate. This is Putative threonylcarbamoyl-AMP synthase from Methanocaldococcus jannaschii (strain ATCC 43067 / DSM 2661 / JAL-1 / JCM 10045 / NBRC 100440) (Methanococcus jannaschii).